Consider the following 226-residue polypeptide: Thioredoxin domain-containing protein 9 (226 aa).

Positions 75 to 180 (EIGSERDFFQ…TTETLEWRLG (106 aa)) constitute a Thioredoxin domain. Phosphoserine occurs at positions 188, 221, and 223.

In terms of assembly, forms ternary complexes with the chaperonin TCP1 complex, spanning the cylindrical chaperonin cavity and contacting at least 2 subunits.

The protein localises to the cytoplasm. Its subcellular location is the nucleus. The protein resides in the cytoskeleton. It is found in the microtubule organizing center. It localises to the centrosome. The protein localises to the midbody. In terms of biological role, significantly diminishes the chaperonin TCP1 complex ATPase activity, thus negatively impacts protein folding, including that of actin or tubulin. The sequence is that of Thioredoxin domain-containing protein 9 (Txndc9) from Rattus norvegicus (Rat).